Reading from the N-terminus, the 407-residue chain is MNGVKSWTVTLVFYFLILAVLIANLDGSSSLFGIIPKRANSSQKPPHLHLQQLGITGSRLLRFFQDNLLEFEGASSLPGDEQPGISLYYDSFKKYLYDAPHGPPRPLECNPDKSIVAKLTKDVQPIPVHSHNDYWRDLPLFQGIAHGAISTEADVWIYPKPTNADTPEDEYILAVGHNEVFLDPVHRTLDGLYTGPLADMLDQVNCVEGHKSGVFYDSPEDTLFFYIDFKSQETHLLYKLLMDKYLKPLMDKGYLTYFDLESKKLVWNQITVILTGDFPKDLGVIDNGENGYYNDNKRYAFQEANILEPTALEPNASVVSTSSLSNLLEKCGYNERSILSQGQMDNSLTKCIKSLISQSHEAGLRTRIWGVPNWPVSFATNLWHQQVENLGVDLLNVDNLDLAQSIF.

A signal peptide spans 1 to 23 (MNGVKSWTVTLVFYFLILAVLIA).

Belongs to the AIM6 family.

The polypeptide is Altered inheritance of mitochondria protein 6 (AIM6) (Zygosaccharomyces rouxii (strain ATCC 2623 / CBS 732 / NBRC 1130 / NCYC 568 / NRRL Y-229)).